The primary structure comprises 420 residues: Alpha-ketoglutarate-dependent xanthine dioxygenase xan-1 (420 aa).

Fe cation-binding residues include His157 and Asp159. 2-oxoglutarate-binding residues include Thr206 and Trp336. His351 contacts Fe cation. Residue Arg366 coordinates 2-oxoglutarate. Arg366 contacts substrate.

The protein belongs to the TfdA dioxygenase family. Fe(2+) serves as cofactor.

Its subcellular location is the cytoplasm. It localises to the cytosol. The enzyme catalyses xanthine + 2-oxoglutarate + O2 = urate + succinate + CO2. In terms of biological role, alpha-ketoglutarate-dependent xanthine dioxygenase is a non-heme mononuclear Fe(2+) enzyme that decarboxylates alpha-ketoglutarate to succinate and CO(2) while hydroxylating xanthine to generate uric acid. Allows xanthine utilization as a nitrogen source. The polypeptide is Alpha-ketoglutarate-dependent xanthine dioxygenase xan-1 (Neurospora crassa (strain ATCC 24698 / 74-OR23-1A / CBS 708.71 / DSM 1257 / FGSC 987)).